A 175-amino-acid chain; its full sequence is B9 domain-containing protein 2 (175 aa).

The 117-residue stretch at 2–118 (AEVHVIGQII…DCPTWRPLGS (117 aa)) folds into the C2 B9-type domain.

It belongs to the B9D family. Part of the tectonic-like complex (also named B9 complex). Interacts with TUBG1. Highest expression in thymus and skeletal muscle. Also expressed in spleen, kidney, lung, heart, microglia and liver. Detected in brain (at protein level).

The protein localises to the cytoplasm. Its subcellular location is the cytoskeleton. It is found in the cilium basal body. The protein resides in the cilium axoneme. It localises to the nucleus. Functionally, component of the tectonic-like complex, a complex localized at the transition zone of primary cilia and acting as a barrier that prevents diffusion of transmembrane proteins between the cilia and plasma membranes. This is B9 domain-containing protein 2 (B9d2) from Mus musculus (Mouse).